The chain runs to 631 residues: Tail sheath protein (631 aa).

Belongs to the myoviridae tail sheath protein family. Homomultimer.

The protein resides in the virion. The protein localises to the host cytoplasm. In terms of biological role, polymerizes as an extended structure around the baseplate-tail tube complex. During ejection, the sheath shifts to a contracted form, thereby making the inner tail tube protrude through the host cell envelope. The chain is Tail sheath protein from Salmonella typhi.